A 92-amino-acid polypeptide reads, in one-letter code: MATTYEEFSAKLDRLDEEFNRKMQEQNAKFFADKPDESTLSPEMKEHYEKFERMIKEHTEKFNKKMHEHSEHFKQKFAELLEQQKAAQYPSK.

It belongs to the KMP-11 family. In terms of assembly, monomer.

It is found in the cytoplasm. The protein resides in the cytoskeleton. May be involved in the regulation of the cytoskeleton through interaction with the subpellicular microtubules. May be involved in parasite mobility and attachment to the surface of the host cell. Behaves as a strong immunogen during infection. The protein is Kinetoplastid membrane protein 11 (KMP-11) of Leishmania tropica.